The chain runs to 318 residues: 2-desacetyl-2-hydroxyethyl bacteriochlorophyllide A dehydrogenase (318 aa).

It participates in porphyrin-containing compound metabolism; bacteriochlorophyll biosynthesis (light-independent). Its function is as follows. This protein catalyzes the penultimate step in bacteriochlorophyll a biosynthesis. This is 2-desacetyl-2-hydroxyethyl bacteriochlorophyllide A dehydrogenase (bchC) from Cereibacter sphaeroides (strain ATCC 17023 / DSM 158 / JCM 6121 / CCUG 31486 / LMG 2827 / NBRC 12203 / NCIMB 8253 / ATH 2.4.1.) (Rhodobacter sphaeroides).